Here is a 200-residue protein sequence, read N- to C-terminus: Translation machinery-associated protein 22 (200 aa).

One can recognise an SUI1 domain in the interval Val-95 to Leu-166.

The protein belongs to the DENR family. In terms of assembly, interacts with the 40S ribosomal subunit.

Its subcellular location is the cytoplasm. The protein is Translation machinery-associated protein 22 (TMA22) of Kluyveromyces lactis (strain ATCC 8585 / CBS 2359 / DSM 70799 / NBRC 1267 / NRRL Y-1140 / WM37) (Yeast).